Reading from the N-terminus, the 72-residue chain is Antitoxin VapB11 (72 aa).

Its function is as follows. Antitoxin component of a type II toxin-antitoxin (TA) system. The sequence is that of Antitoxin VapB11 (vapB11) from Mycobacterium tuberculosis (strain CDC 1551 / Oshkosh).